The following is a 396-amino-acid chain: Phosphoglycerate kinase (396 aa).

Residues aspartate 20–asparagine 22, arginine 35, histidine 58–arginine 61, arginine 115, and arginine 155 contribute to the substrate site. Residues glutamate 328 and glycine 353 to threonine 356 contribute to the ATP site.

It belongs to the phosphoglycerate kinase family. Monomer.

The protein resides in the cytoplasm. The enzyme catalyses (2R)-3-phosphoglycerate + ATP = (2R)-3-phospho-glyceroyl phosphate + ADP. The protein operates within carbohydrate degradation; glycolysis; pyruvate from D-glyceraldehyde 3-phosphate: step 2/5. This is Phosphoglycerate kinase from Natronomonas pharaonis (strain ATCC 35678 / DSM 2160 / CIP 103997 / JCM 8858 / NBRC 14720 / NCIMB 2260 / Gabara) (Halobacterium pharaonis).